Consider the following 318-residue polypeptide: MRLLAGWLCLSLASVWLARRMWTLRSPLTRSLYVNMTSGPGGPAAAAGGRKENHQWYVCNREKLCESLQAVFVQSYLDQGTQIFLNNSIEKSGWLFIQLYHSFVSSVFSLFMSRTSINGLLGRGSMFVFSPDQFQRLLKINPDWKTHRLLDLGAGDGEVTKIMSPHFEEIYATELSETMIWQLQKKKYRVLGINEWQNTGFQYDVISCLNLLDRCDQPLTLLKDIRSVLEPTRGRVILALVLPFHPYVENVGGKWEKPSEILEIKGQNWEEQVNSLPEVFRKAGFVIEAFTRLPYLCEGDMYNDYYVLDDAVFVLKPV.

An N-terminal signal peptide occupies residues 1 to 18 (MRLLAGWLCLSLASVWLA). N35 is a glycosylation site (N-linked (GlcNAc...) asparagine). Residues E174, N210, and Y295 each contribute to the S-adenosyl-L-homocysteine site.

Belongs to the METTL9 family.

It is found in the endoplasmic reticulum. It localises to the mitochondrion. It catalyses the reaction L-histidyl-[protein] + S-adenosyl-L-methionine = N(pros)-methyl-L-histidyl-[protein] + S-adenosyl-L-homocysteine + H(+). Protein-histidine N-methyltransferase that specifically catalyzes 1-methylhistidine (pros-methylhistidine) methylation of target proteins. Specifically methylates the second His of proteins with a His-x-His (HxH) motif (where 'x' is preferably a small amino acid), while exploiting the first one as a recognition signature. Catalyzes methylation of target proteins such as S100A9, NDUFB3, SLC39A5, SLC39A7, ARMC6 and DNAJB12; 1-methylhistidine modification may affect the binding of zinc and other metals to its target proteins. Constitutes the main methyltransferase for the 1-methylhistidine modification in cell. The protein is Protein-L-histidine N-pros-methyltransferase of Homo sapiens (Human).